The primary structure comprises 780 residues: Cullin-5 (780 aa).

Residue Ser34 is modified to Phosphoserine. Thr210 carries the phosphothreonine modification. Positions 711–772 (RILRTQEAII…HRYIRRDEAD (62 aa)) constitute a Cullin neddylation domain. Lys724 is covalently cross-linked (Glycyl lysine isopeptide (Lys-Gly) (interchain with G-Cter in NEDD8)).

This sequence belongs to the cullin family. As to quaternary structure, component of multiple cullin-5-RING E3 ubiquitin-protein ligase complexes (ECS complexes, also named CRL5 complexes) formed of CUL5, Elongin BC (ELOB and ELOC), RNF7/RBX2 and a variable SOCS box domain-containing protein as substrate-specific recognition component. CUL5-containing ECS complexes specifically contain RNF7/RBX2, and not RBX1, as catalytic subunit. Component of the ECS(ASB2) complex with the substrate recognition component ASB2. Component of the ECS(ASB6) complex with the substrate recognition component ASB6. Component of the ECS(ASB7) complex with the substrate recognition component ASB7. Component of the ECS(ASB9) complex with the substrate recognition component ASB9. Component of the ECS(ASB11) complex with the substrate recognition component ASB11. Component of the ECS(ASB12) complex with the substrate recognition component ASB12. Component of the ECS(LRRC41) complex with the substrate recognition component LRRC41. Component of the ECS(SOCS1) complex with the substrate recognition component SOCS1. Component of the ECS(SOCS2) complex with the substrate recognition component SOCS2. Component of the ECS(WSB1) complex with the substrate recognition subunit WSB1. Component of the ECS(SOCS3) complex with the substrate recognition component SOCS3. Component of the ECS(SOCS7) complex with the substrate recognition component SOCS7. Component of the ECS(SPSB1) complex with the substrate recognition component SPSB1. Component of the ECS(SPSB3) complex with the substrate recognition component SPSB3. Component of the ECS(SPSB2) complex with the substrate recognition component SPSB2. Component of the ECS(SPSB4) complex with the substrate recognition component SPSB4. Component of the ECS(RAB40) complex with the substrate recognition subunit RAB40A, RAB40B or RAB40C. Component of the ECS(KLHDC1) complex with the substrate recognition component KLHDC1. Component of the ECS(PCMTD1) complex with the substrate recognition subunit PCMTD1. May also form complexes containing RBX1 and ELOA or VHL; additional evidence is however required to confirm this result in vivo. Interacts (when neddylated) with ARIH2; leading to activate the E3 ligase activity of ARIH2. Interacts with ERCC6; the interaction is induced by DNA damaging agents or inhibitors of RNA polymerase II elongation. Interacts with ELOA (via the BC-box). Interacts (unneddylated form) with DCUN1D1, DCUN1D2, DCUN1D3, DCUN1D4 and DCUN1D5; these interactions promote the cullin neddylation. Neddylated; which enhances the ubiquitination activity of ECS complexes and prevents binding of the inhibitor CAND1. Deneddylated via its interaction with the COP9 signalosome (CSN).

Its subcellular location is the nucleus. Its pathway is protein modification; protein ubiquitination. Functionally, core component of multiple cullin-5-RING E3 ubiquitin-protein ligase complexes (ECS complexes, also named CRL5 complexes), which mediate the ubiquitination and subsequent proteasomal degradation of target proteins. Acts a scaffold protein that contributes to catalysis through positioning of the substrate and the ubiquitin-conjugating enzyme. The functional specificity of the E3 ubiquitin-protein ligase complex depends on the variable SOCS box-containing substrate recognition component. Acts as a key regulator of neuron positioning during cortex development: component of various SOCS-containing ECS complexes, such as the ECS(SOCS7) complex, that regulate reelin signaling by mediating ubiquitination and degradation of DAB1. ECS(SOCS1) seems to direct ubiquitination of JAK2. The ECS(SOCS2) complex mediates the ubiquitination and subsequent proteasomal degradation of phosphorylated EPOR and GHR. The ECS(SPSB3) complex catalyzes ubiquitination of nuclear CGAS. ECS(KLHDC1) complex is part of the DesCEND (destruction via C-end degrons) pathway and mediates ubiquitination and degradation of truncated SELENOS selenoprotein produced by failed UGA/Sec decoding, which ends with a glycine. The ECS(ASB9) complex mediates ubiquitination and degradation of CKB. As part of some ECS complex, promotes 'Lys-11'-linked ubiquitination and degradation of BTRC. As part of a multisubunit ECS complex, polyubiquitinates monoubiquitinated POLR2A. As part of the ECS(RAB40C) complex, mediates ANKRD28 ubiquitination and degradation, thereby regulating protein phosphatase 6 (PP6) complex activity and focal adhesion assembly during cell migration. As part of the ECS(RAB40A) complex, mediates RHOU 'Lys-48'-linked ubiquitination and degradation, thus inhibiting focal adhesion disassembly during cell migration. As part of the ECS(RAB40B) complex, mediates LIMA1/EPLIN and RAP2 ubiquitination, thereby regulating actin cytoskeleton dynamics and stress fiber formation during cell migration. May form a cell surface vasopressin receptor. The polypeptide is Cullin-5 (Mus musculus (Mouse)).